The following is a 1413-amino-acid chain: DNA-directed RNA polymerase subunit beta' (1413 aa).

The Zn(2+) site is built by Cys-70, Cys-72, Cys-85, and Cys-88. Residues Asp-460, Asp-462, and Asp-464 each coordinate Mg(2+). Zn(2+) is bound by residues Cys-819, Cys-893, Cys-900, and Cys-903. Residues 1393–1413 (EAFEFGTPETPAAEQTPHTNE) are disordered.

It belongs to the RNA polymerase beta' chain family. In terms of assembly, the RNAP catalytic core consists of 2 alpha, 1 beta, 1 beta' and 1 omega subunit. When a sigma factor is associated with the core the holoenzyme is formed, which can initiate transcription. It depends on Mg(2+) as a cofactor. The cofactor is Zn(2+).

It catalyses the reaction RNA(n) + a ribonucleoside 5'-triphosphate = RNA(n+1) + diphosphate. DNA-dependent RNA polymerase catalyzes the transcription of DNA into RNA using the four ribonucleoside triphosphates as substrates. The polypeptide is DNA-directed RNA polymerase subunit beta' (Paraburkholderia phymatum (strain DSM 17167 / CIP 108236 / LMG 21445 / STM815) (Burkholderia phymatum)).